A 286-amino-acid chain; its full sequence is Bark leucoagglutinin (286 aa).

The N-terminal stretch at 1–28 (ATSNSKPTQVLLATFLTFFFLLLNNVNS) is a signal peptide. Tyr73 contacts N-acetyl-alpha-neuraminyl-(2-&gt;3)-beta-D-galactosyl-(1-&gt;4)-beta-D-glucose. N-linked (GlcNAc...) asparagine glycosylation occurs at Asn89. The N-acetyl-alpha-neuraminyl-(2-&gt;3)-beta-D-galactosyl-(1-&gt;4)-beta-D-glucose site is built by Asp115 and Lys135. The N-linked (GlcNAc...) asparagine glycan is linked to Asn141. Residues Glu155 and Asp157 each contribute to the Mn(2+) site. Positions 157, 159, 165, and 168 each coordinate Ca(2+). The N-acetyl-alpha-neuraminyl-(2-&gt;3)-beta-D-galactosyl-(1-&gt;4)-beta-D-glucose site is built by Tyr159 and Asp165. Positions 168 and 173 each coordinate Mn(2+). N-linked (GlcNAc...) asparagine glycosylation is found at Asn207 and Asn219. Residues 278-286 (NVHIARYTA) constitute a propeptide, removed in mature form.

It belongs to the leguminous lectin family.

Functionally, sialic acid-binding lectin specifically recognizing the trisaccharide sequence Neu5Ac/Gc-alpha-2,3-Gal-beta-1,4-GlcNAc/Glc. In Maackia amurensis (Amur maackia), this protein is Bark leucoagglutinin.